Reading from the N-terminus, the 460-residue chain is Tol-Pal system protein TolB (460 aa).

An N-terminal signal peptide occupies residues 1–22; that stretch reads MTIFQKSFILLIIWNFSLFAFS.

The protein belongs to the TolB family. The Tol-Pal system is composed of five core proteins: the inner membrane proteins TolA, TolQ and TolR, the periplasmic protein TolB and the outer membrane protein Pal. They form a network linking the inner and outer membranes and the peptidoglycan layer.

The protein resides in the periplasm. In terms of biological role, part of the Tol-Pal system, which plays a role in outer membrane invagination during cell division and is important for maintaining outer membrane integrity. TolB occupies a key intermediary position in the Tol-Pal system because it communicates directly with both membrane-embedded components, Pal in the outer membrane and TolA in the inner membrane. The sequence is that of Tol-Pal system protein TolB from Blochmanniella floridana.